The sequence spans 443 residues: Trihelix transcription factor ASIL2 (443 aa).

A disordered region spans residues 1 to 82; the sequence is MEDDEDIRSQ…RPTGGGGRED (82 aa). Over residues 38–48 the composition is skewed to polar residues; that stretch reads YSLTPPGNSSQ. Gly residues predominate over residues 64–78; sequence SGGGNNSSGRPTGGG. A Myb-like domain is found at 84–144; the sequence is WSEAATAVLI…QCKNRIDTVK (61 aa). Disordered stretches follow at residues 238–350 and 413–443; these read FGGS…GNKW and RRMG…LGNN. The segment covering 239 to 249 has biased composition (gly residues); sequence GGSGGGGGGGS. Positions 271 to 286 are enriched in low complexity; that stretch reads TLPQQGRTLPQQQQQG. The Bipartite nuclear localization signal motif lies at 290-303; it reads KRCSESKRWRFRKR. A compositionally biased stretch (basic and acidic residues) spans 333–350; sequence MKTEEKKKQDGDGVGNKW. A coiled-coil region spans residues 360-414; it reads FGEAYEQTENAKLQQVVEMEKERMKFLKELELQRMQFFVKTQLEISQLKQQHGRR. The segment covering 428–443 has biased composition (low complexity); it reads NNINAIVNNNNDLGNN.

The protein resides in the nucleus. Functionally, transcription regulator that may repress the maturation program during early embryogenesis. In Arabidopsis thaliana (Mouse-ear cress), this protein is Trihelix transcription factor ASIL2.